A 34-amino-acid chain; its full sequence is Photosystem II reaction center protein M (34 aa).

The helical transmembrane segment at 5–25 (ILAFIATALFILIPTAFLLII) threads the bilayer.

It belongs to the PsbM family. PSII is composed of 1 copy each of membrane proteins PsbA, PsbB, PsbC, PsbD, PsbE, PsbF, PsbH, PsbI, PsbJ, PsbK, PsbL, PsbM, PsbT, PsbX, PsbY, PsbZ, Psb30/Ycf12, at least 3 peripheral proteins of the oxygen-evolving complex and a large number of cofactors. It forms dimeric complexes.

It localises to the plastid. It is found in the chloroplast thylakoid membrane. Its function is as follows. One of the components of the core complex of photosystem II (PSII). PSII is a light-driven water:plastoquinone oxidoreductase that uses light energy to abstract electrons from H(2)O, generating O(2) and a proton gradient subsequently used for ATP formation. It consists of a core antenna complex that captures photons, and an electron transfer chain that converts photonic excitation into a charge separation. This subunit is found at the monomer-monomer interface. The chain is Photosystem II reaction center protein M from Lolium perenne (Perennial ryegrass).